The sequence spans 138 residues: Histone H2B.3 (138 aa).

Basic and acidic residues-rich tracts occupy residues 1–18 (MAPK…EKTT) and 26–38 (EKRP…GGDK). Positions 1-46 (MAPKAEKKPVAEKAEKTTAAKKTKAEKRPPASKEGGDKKGKKKSKK) are disordered. N6-acetyllysine is present on residues Lys7 and Lys27. Lys134 is covalently cross-linked (Glycyl lysine isopeptide (Lys-Gly) (interchain with G-Cter in ubiquitin)).

It belongs to the histone H2B family. In terms of assembly, the nucleosome is a histone octamer containing two molecules each of H2A, H2B, H3 and H4 assembled in one H3-H4 heterotetramer and two H2A-H2B heterodimers. The octamer wraps approximately 147 bp of DNA. Post-translationally, can be acetylated to form H2BK6ac and H2BK33ac. In terms of processing, monoubiquitinated to form H2BK143ub1; may give a specific tag for epigenetic transcriptional activation.

Its subcellular location is the nucleus. It localises to the chromosome. Functionally, core component of nucleosome. Nucleosomes wrap and compact DNA into chromatin, limiting DNA accessibility to the cellular machineries which require DNA as a template. Histones thereby play a central role in transcription regulation, DNA repair, DNA replication and chromosomal stability. DNA accessibility is regulated via a complex set of post-translational modifications of histones, also called histone code, and nucleosome remodeling. The protein is Histone H2B.3 of Triticum aestivum (Wheat).